A 458-amino-acid polypeptide reads, in one-letter code: Vacuolar basic amino acid transporter 3 (458 aa).

At 1-9 the chain is on the cytoplasmic side; the sequence is MNMLIVGRV. The helical transmembrane segment at 10-30 threads the bilayer; the sequence is VASVGGSGLQTLCFVIGCTMV. Residues 31–36 are Vacuolar-facing; that stretch reads GERSRP. The chain crosses the membrane as a helical span at residues 37–57; it reads LVISILSCAFAVAAIVGPIIG. Residues 58–67 lie on the Cytoplasmic side of the membrane; sequence GAFTTHVTWR. The helical transmembrane segment at 68–88 threads the bilayer; it reads WCFYINLPIGGLAIIMFLLTY. Over 89 to 132 the chain is Vacuolar; the sequence is KAENKGILQQIKDAIGTISSFTFSKFRHQVNFKRLMNGIIFKFD. A helical transmembrane segment spans residues 133 to 153; the sequence is FFGFALCSAGLVLFLLGLTFG. Residues 154-163 are Cytoplasmic-facing; it reads GNKYSWNSGQ. Residues 164–184 form a helical membrane-spanning segment; it reads VIAYLVLGVLLFIFSLVYDFF. Residues 185 to 205 are Vacuolar-facing; it reads LFDKFNPEPDNISYRPLLLRR. Residue Asn195 is glycosylated (N-linked (GlcNAc...) asparagine). A helical membrane pass occupies residues 206-226; sequence LVAKPAIIIINMVTFLLCTGY. Residues 227 to 248 are Cytoplasmic-facing; the sequence is NGQMIYSVQFFQLIFASSAWKA. A helical membrane pass occupies residues 249-269; it reads GLHLIPIVITNVIAAIASGVI. Over 270 to 277 the chain is Vacuolar; it reads TKKLGLVK. A helical transmembrane segment spans residues 278–298; the sequence is PLLIFGGVLGVIGAGLMTLMT. Residues 299–306 are Cytoplasmic-facing; sequence NTSTKSTQ. A helical membrane pass occupies residues 307–327; sequence IGVLLLPGFSLGFALQASLMS. Residues 328–415 are Vacuolar-facing; the sequence is AQLQITKDRP…STIGNILSDS (88 aa). The chain crosses the membrane as a helical span at residues 416 to 436; it reads IKNVFWMDLGFYALGFLFCSF. Topologically, residues 437–458 are cytoplasmic; the sequence is SSNKKLIIPKKDETPEDNLEDK.

It belongs to the major facilitator superfamily.

It localises to the vacuole membrane. In terms of biological role, transporter required for vacuolar uptake of histidine and lysine. This Saccharomyces cerevisiae (strain ATCC 204508 / S288c) (Baker's yeast) protein is Vacuolar basic amino acid transporter 3 (VBA3).